A 515-amino-acid polypeptide reads, in one-letter code: MNDQVIIFDTTLRDGEQALSASLTVKEKLQIAYALERLGVDVIEAGFPISSPGDFESVQTIAKHIKNSRVCALSRAVAKDIDAAAEALKVADQFRIHTFLATSTIHVQDKLRRSYDDVLEMAVNAVKHARNYTDDVEFSCEDAGRTPIDNLCRMVEAAIDAGASTINIPDTVGYTVPSEFGGIIQTLFNRVPNIDKAIISVHCHDDLGMSVANSIAAVQAGARQIEGTINGIGERAGNCSLEEIAMIIKTRQELLGVSTGIKHEEIHRTSKLVSQLCNMPIQSNKAVVGANAFSHSSGIHQDGMLKNKNTYEIMTPESIGLKNQALNLTSRSGRAAVKSHMDSMGYKEDEYNLDALYADFLKLADRKGQVFDYDLEALMHFSNLREEDDFYKLNYLSVQSGSVMATTSIKMQCGDAEMCEAAVGNGPVDALYQCIYRVTGYEIVLDKFDLTAKGEGEDGLGQADIIANYKGRKYHGTGVSTDIVEASGQALLHVINSIHRADTIAEMKQKKIATV.

Positions 5–267 (VIIFDTTLRD…STGIKHEEIH (263 aa)) constitute a Pyruvate carboxyltransferase domain. Mn(2+)-binding residues include D14, H202, H204, and N238. Residues 392 to 515 (KLNYLSVQSG…EMKQKKIATV (124 aa)) are regulatory domain.

It belongs to the alpha-IPM synthase/homocitrate synthase family. LeuA type 1 subfamily. As to quaternary structure, homodimer. It depends on Mn(2+) as a cofactor.

It is found in the cytoplasm. The catalysed reaction is 3-methyl-2-oxobutanoate + acetyl-CoA + H2O = (2S)-2-isopropylmalate + CoA + H(+). Its pathway is amino-acid biosynthesis; L-leucine biosynthesis; L-leucine from 3-methyl-2-oxobutanoate: step 1/4. Functionally, catalyzes the condensation of the acetyl group of acetyl-CoA with 3-methyl-2-oxobutanoate (2-ketoisovalerate) to form 3-carboxy-3-hydroxy-4-methylpentanoate (2-isopropylmalate). The protein is 2-isopropylmalate synthase of Vibrio parahaemolyticus serotype O3:K6 (strain RIMD 2210633).